The primary structure comprises 576 residues: Arginine--tRNA ligase (576 aa).

Residues 128–136 (PTGPMHIGH) carry the 'HIGH' region motif.

The protein belongs to the class-I aminoacyl-tRNA synthetase family. Monomer.

It is found in the cytoplasm. The catalysed reaction is tRNA(Arg) + L-arginine + ATP = L-arginyl-tRNA(Arg) + AMP + diphosphate. The sequence is that of Arginine--tRNA ligase from Rickettsia conorii (strain ATCC VR-613 / Malish 7).